Reading from the N-terminus, the 350-residue chain is tRNA U34 carboxymethyltransferase (350 aa).

Carboxy-S-adenosyl-L-methionine contacts are provided by residues Lys-101, Trp-125, Lys-130, Gly-150, Asp-172–Ser-174, Leu-208–Glu-209, Met-224, Tyr-228, and Arg-343.

This sequence belongs to the class I-like SAM-binding methyltransferase superfamily. CmoB family. Homotetramer.

The catalysed reaction is carboxy-S-adenosyl-L-methionine + 5-hydroxyuridine(34) in tRNA = 5-carboxymethoxyuridine(34) in tRNA + S-adenosyl-L-homocysteine + H(+). Functionally, catalyzes carboxymethyl transfer from carboxy-S-adenosyl-L-methionine (Cx-SAM) to 5-hydroxyuridine (ho5U) to form 5-carboxymethoxyuridine (cmo5U) at position 34 in tRNAs. The chain is tRNA U34 carboxymethyltransferase from Psychrobacter arcticus (strain DSM 17307 / VKM B-2377 / 273-4).